The following is a 2547-amino-acid chain: Lovastatin diketide synthase mokB (2547 aa).

Residues 10 to 430 (PTPIAVVGMG…GANAHAIVER (421 aa)) enclose the Ketosynthase family 3 (KS3) domain. Residues cysteine 183, histidine 318, and histidine 353 each act as for beta-ketoacyl synthase activity in the active site. Positions 545–890 (VFTGQGAQWF…MDLLQGGYPV (346 aa)) are acyl and malonyl transferase. The For malonyltransferase activity role is filled by serine 635. The N-terminal hotdog fold stretch occupies residues 941–1079 (HDLIGVQEPL…GLIRAQVDHP (139 aa)). The region spanning 941–1252 (HDLIGVQEPL…FQSLGAVISD (312 aa)) is the PKS/mFAS DH domain. The active-site Proton acceptor; for dehydratase activity is histidine 973. Residues 973–985 (HVVGSRILFPGAG) form a dehydratase-like region. The segment at 1095-1252 (SRKMAPQDLW…FQSLGAVISD (158 aa)) is C-terminal hotdog fold. Catalysis depends on aspartate 1160, which acts as the Proton donor; for dehydratase activity. A disulfide bond links cysteine 1340 and cysteine 1379. Residues 1510–1547 (YDVVLACQVLHATSNMQRTLNNVRKLLKPGGKLILVET) form a methyltransferase region. Residues 2459–2541 (ASTEEEATAL…EVAEVVVKKY (83 aa)) enclose the Carrier domain. Serine 2501 carries the post-translational modification O-(pantetheine 4'-phosphoryl)serine.

Requires pantetheine 4'-phosphate as cofactor.

It catalyses the reaction holo-[2-methylbutanoate polyketide synthase] + 2 malonyl-CoA + S-adenosyl-L-methionine + 2 NADPH + 3 H(+) = (S)-2-methylbutanoyl-[2-methylbutanoate polyketide synthase] + S-adenosyl-L-homocysteine + 2 CO2 + 2 NADP(+) + 2 CoA + H2O. It functions in the pathway polyketide biosynthesis; lovastatin biosynthesis. Functionally, diketide synthase; part of the gene cluster that mediates the biosynthesis of monakolin K, also known as lovastatin, and which acts as a potent competitive inhibitor of HMG-CoA reductase. Monakolin K biosynthesis is performed in two stages. The first stage is catalyzed by the nonaketide synthase mokA, which belongs to type I polyketide synthases and catalyzes the iterative nine-step formation of the polyketide. This PKS stage completed by the action of dehydrogenase mokE, which catalyzes the NADPH-dependent reduction of the unsaturated tetra-, penta- and heptaketide intermediates that arise during the mokA-mediated biosynthesis of the nonaketide chain and leads to dihydromonacolin L. Covalently bound dihydromonacolin L is released from mokA by the mokD esterase. Conversion of dihydromonacolin L into monacolin L and then monacolin J is subsequently performed with the participation of molecular oxygen and P450 monoogygenase mokC. Finally, mokF performs the conversion of monacoline J to monacoline K through the addition of the side-chain diketide moiety (2R)-2-methylbutanoate produced by the diketide synthase mokB. In Monascus pilosus (Red mold), this protein is Lovastatin diketide synthase mokB.